The following is a 125-amino-acid chain: RxLR effector protein Avh6 (125 aa).

The N-terminal stretch at 1–25 (MRLSSTTFVVLAAVLLASGTAVSKA) is a signal peptide. Positions 48–70 (RFLRSHHTEDGKAKLSNYDNEER) match the RxLR-dEER motif.

It belongs to the RxLR effector family.

It is found in the secreted. The protein resides in the host cell. Functionally, effector that suppresses plant defense responses during the early stages of pathogen infection. Suppresses cell death induced by effectors and PAMPs in plant hosts. Triggers a hypersensitive response (HR) in the presence of Rps1d. Suppresses BAX-induced cell death and enhanced P.capsici infection in Nicotiana benthamiana. Also suppresses effector-triggered immunity induction by associating with Avr1b and Rps1b, suggesting a role in suppressing plant immunity. This chain is RxLR effector protein Avh6, found in Phytophthora sojae (Soybean stem and root rot agent).